A 605-amino-acid polypeptide reads, in one-letter code: MASEYLEHKLALLPGLPGCYLMKNINSQIIYVGKAKNLKNRVRSYFKSSHTGKTAQLVSEIVDFETIITSTDKEAFLLEITLIQKHQPYFNIKLKRGTGYPYIKITNERDPQLLLVSDIRKDGAYYFGPYPNVYAAEETMHFLQKVYPLRRCPGHQGRPCLYYHMGQCLGACFKEVPEAEYDQQIRKIKSFLNGNVGHAKKDLTQRMEKAAADMAYERAGDLRDQIRYIEATVEKQKIISNDSTPRDIFNFYLDKGWLSIQVFFIRQARLMKREKRLFPVVNSAEEELASFIVQFYQRKNTVLPREILVPASIDHDVIEELLKVPVRTPQRGTKRDLLEMAGKNAKLVLEEKFRLLELDEGKTTGAMKEITDALGIAPGHKIEAFDHSHIQGADLVSAMVVFVDGQPNKKLYRKYKLQTVDHADETASTLEVIRRRYGRLLKEHAPMPDLILMDGGDIQMNAVKEVLEDEFDLHIPVAGMVKNDHHKTADLLFGPDDHHVHLDPKSQGFYLVQRIQDEVHRFAISFHRQVHTKHSLSSRLDRIPGVGPKTRNKLLRKFGSTKKISEASMAEIRELGISEAVARTIHVTLAAETAEIKNPRTPTSL.

The GIY-YIG domain maps to 15–92 (GLPGCYLMKN…IQKHQPYFNI (78 aa)). The 36-residue stretch at 197–232 (GHAKKDLTQRMEKAAADMAYERAGDLRDQIRYIEAT) folds into the UVR domain.

The protein belongs to the UvrC family. Interacts with UvrB in an incision complex.

It localises to the cytoplasm. In terms of biological role, the UvrABC repair system catalyzes the recognition and processing of DNA lesions. UvrC both incises the 5' and 3' sides of the lesion. The N-terminal half is responsible for the 3' incision and the C-terminal half is responsible for the 5' incision. The chain is UvrABC system protein C from Levilactobacillus brevis (strain ATCC 367 / BCRC 12310 / CIP 105137 / JCM 1170 / LMG 11437 / NCIMB 947 / NCTC 947) (Lactobacillus brevis).